The primary structure comprises 287 residues: Large ribosomal subunit protein uL2 (287 aa).

Disordered regions lie at residues 25 to 57 (TKTE…RGGG) and 203 to 287 (LSAG…GRES). 2 stretches are compositionally biased toward basic residues: residues 209–220 (GRNRWKGRRPKV) and 259–287 (TRNR…GRES).

The protein belongs to the universal ribosomal protein uL2 family. In terms of assembly, part of the 50S ribosomal subunit. Forms a bridge to the 30S subunit in the 70S ribosome.

One of the primary rRNA binding proteins. Required for association of the 30S and 50S subunits to form the 70S ribosome, for tRNA binding and peptide bond formation. It has been suggested to have peptidyltransferase activity; this is somewhat controversial. Makes several contacts with the 16S rRNA in the 70S ribosome. This chain is Large ribosomal subunit protein uL2, found in Nostoc punctiforme (strain ATCC 29133 / PCC 73102).